The sequence spans 394 residues: Acetyl-CoA acetyltransferase (394 aa).

Residue cysteine 88 is the Acyl-thioester intermediate of the active site. Catalysis depends on proton acceptor residues histidine 349 and cysteine 379.

The protein belongs to the thiolase-like superfamily. Thiolase family.

It is found in the cytoplasm. It carries out the reaction 2 acetyl-CoA = acetoacetyl-CoA + CoA. The protein operates within metabolic intermediate biosynthesis; (R)-mevalonate biosynthesis; (R)-mevalonate from acetyl-CoA: step 1/3. The protein is Acetyl-CoA acetyltransferase (atoB) of Escherichia coli (strain K12).